We begin with the raw amino-acid sequence, 140 residues long: Large ribosomal subunit protein uL11 (140 aa).

It belongs to the universal ribosomal protein uL11 family. In terms of assembly, part of the ribosomal stalk of the 50S ribosomal subunit. Interacts with L10 and the large rRNA to form the base of the stalk. L10 forms an elongated spine to which L12 dimers bind in a sequential fashion forming a multimeric L10(L12)X complex. One or more lysine residues are methylated.

Functionally, forms part of the ribosomal stalk which helps the ribosome interact with GTP-bound translation factors. The polypeptide is Large ribosomal subunit protein uL11 (Desulfovibrio desulfuricans (strain ATCC 27774 / DSM 6949 / MB)).